A 359-amino-acid chain; its full sequence is MTLESMMACCLSDEVKESKRINAEIEKQLRRDKRDARRELKLLLLGTGESGKSTFIKQMRIIHGAGYSEEDKRGFTKLVYQNIFTAMQAMIRAMETLKILYKYEQNKANALLIREVDVEKVTTFEHRYVSAIKTLWNDPGIQECYDRRREYQLSDSAKYYLTDVDRIATSGYLPTQQDVLRVRVPTTGIIEYPFDLENIIFRMVDVGGQRSERRKWIHCFENVTSIMFLVALSEYDQVLVESDNENRMEESKALFRTIVTYPWFQNSSVILFLNKKDLLEDKILFSHLVDYFPEFDGPQRVAQAAREFILKMFVDLNPDSDKIIYSHFTCATDTENIRFVFAAVKDTILQLNLKEYNLV.

Residues Cys-9 and Cys-10 are each lipidated (S-palmitoyl cysteine). The G-alpha domain occupies Arg-38–Val-359. Residues Lys-41 to Thr-54 are G1 motif. Residues Gly-46–Ser-53 and Leu-180–Arg-183 each bind GTP. Ser-53 lines the Mg(2+) pocket. The segment at Asp-178–Thr-186 is G2 motif. Thr-186 lines the Mg(2+) pocket. Residues Phe-201–Arg-210 are G3 motif. The interval Ile-270–Asp-277 is G4 motif. Residues Asn-274 to Asp-277 and Ala-331 each bind GTP. Positions Thr-329 to Thr-334 are G5 motif.

The protein belongs to the G-alpha family. G(q) subfamily. As to quaternary structure, g proteins are composed of 3 units; alpha, beta and gamma. The alpha chain contains the guanine nucleotide binding site. Interacts with RGS22. Interacts with NTSR1.

Its subcellular location is the cell membrane. It is found in the cytoplasm. It catalyses the reaction GTP + H2O = GDP + phosphate + H(+). Functionally, guanine nucleotide-binding proteins (G proteins) function as transducers downstream of G protein-coupled receptors (GPCRs) in numerous signaling cascades. The alpha chain contains the guanine nucleotide binding site and alternates between an active, GTP-bound state and an inactive, GDP-bound state. Signaling by an activated GPCR promotes GDP release and GTP binding. The alpha subunit has a low GTPase activity that converts bound GTP to GDP, thereby terminating the signal. Both GDP release and GTP hydrolysis are modulated by numerous regulatory proteins. Signaling is mediated via phospholipase C-beta-dependent inositol lipid hydrolysis for signal propagation: activates phospholipase C-beta: following GPCR activation, GNA11 activates PLC-beta (PLCB1, PLCB2, PLCB3 or PLCB4), leading to production of diacylglycerol (DAG) and inositol 1,4,5-trisphosphate (IP3). Transduces FFAR4 signaling in response to long-chain fatty acids (LCFAs). Together with GNAQ, required for heart development. In the respiratory epithelium, transmits OXGR1-dependent signals that lead to downstream intracellular Ca(2+) release and mucocilliary clearance of airborne pathogens. In Sus scrofa (Pig), this protein is Guanine nucleotide-binding protein subunit alpha-11 (GNA11).